The chain runs to 463 residues: MTKQATNAVLKKGQRFPLTIKRLGINGEGVGYFKRHVVFVPGALPGEEVVVEVTDVKPRFAEASIRKIRKSSPDRISPPCPVYDQCGGCQLQHLSYEATLKEKREIVKQAFERHTTLRADTLTILPTIGMEDPWAYRNKSQLQLKTEKGQVKAGLYVMNTHKLVDLSSCLVQHDATNEASEVVKQIVQDLQIPTYNERKRTGILRSVVSRVGFETGELQVILVTTKKDFPKKDLLVEEIKSRLPHVKSLQQNINPKKTSLIMGDETISLFGEETIEETLGDISFSLSARAFFQLNPKQTVKLYNEVKRAAALTGKEKVIDAYCGVGTIGLWLADQAREVRGMDVIAEAIEDAKENAKRQGITNVQYEVGKAEKIIPSWVRSSWIPDVIVVDPPRTGCDDQLLKTIKQTKPKRIVYVSCNPSTLAKDVEQLQRSGYKVKNIQPVDMFPWTAQVESCTLLVYEGK.

Residues 9-67 (VLKKGQRFPLTIKRLGINGEGVGYFKRHVVFVPGALPGEEVVVEVTDVKPRFAEASIRK) form the TRAM domain. 4 residues coordinate [4Fe-4S] cluster: Cys-80, Cys-86, Cys-89, and Cys-169. S-adenosyl-L-methionine contacts are provided by Gln-293, Tyr-322, Asp-343, and Asp-391. Cys-418 serves as the catalytic Nucleophile.

It belongs to the class I-like SAM-binding methyltransferase superfamily. RNA M5U methyltransferase family.

This is an uncharacterized protein from Halalkalibacterium halodurans (strain ATCC BAA-125 / DSM 18197 / FERM 7344 / JCM 9153 / C-125) (Bacillus halodurans).